The primary structure comprises 302 residues: Protoheme IX farnesyltransferase (302 aa).

The next 9 membrane-spanning stretches (helical) occupy residues Val-26–Val-46, Trp-48–Leu-68, Val-98–Asn-118, Leu-120–Leu-140, Ile-148–Gly-168, Ala-174–Val-194, Ile-221–Gly-241, Leu-244–Leu-264, and Ile-280–Leu-300.

The protein belongs to the UbiA prenyltransferase family. Protoheme IX farnesyltransferase subfamily.

The protein resides in the cell inner membrane. It catalyses the reaction heme b + (2E,6E)-farnesyl diphosphate + H2O = Fe(II)-heme o + diphosphate. Its pathway is porphyrin-containing compound metabolism; heme O biosynthesis; heme O from protoheme: step 1/1. Its function is as follows. Converts heme B (protoheme IX) to heme O by substitution of the vinyl group on carbon 2 of heme B porphyrin ring with a hydroxyethyl farnesyl side group. This Alkalilimnicola ehrlichii (strain ATCC BAA-1101 / DSM 17681 / MLHE-1) protein is Protoheme IX farnesyltransferase.